The following is a 450-amino-acid chain: Phosphoglucosamine mutase (450 aa).

S101 functions as the Phosphoserine intermediate in the catalytic mechanism. 4 residues coordinate Mg(2+): S101, D240, D242, and D244. Residue S101 is modified to Phosphoserine.

It belongs to the phosphohexose mutase family. Mg(2+) is required as a cofactor. Post-translationally, activated by phosphorylation.

The enzyme catalyses alpha-D-glucosamine 1-phosphate = D-glucosamine 6-phosphate. Its function is as follows. Catalyzes the conversion of glucosamine-6-phosphate to glucosamine-1-phosphate. This is Phosphoglucosamine mutase from Streptococcus agalactiae serotype Ia (strain ATCC 27591 / A909 / CDC SS700).